A 395-amino-acid chain; its full sequence is MSKTIAINAGSSSLKWQLYQMPNEEVIAKGIVERIGLKDSIFTIKYGEGQKYEVIVDIDNHEVAVKMLLDQLIDLNILGSYDEITGVGHRVVAGGEEFKDSVVITDEVLEKIEALSELAPLHNPANAMGIKAFKHILPEIISVAVFDTSFHTTMPEHNYLYSVPREYYEKFAARKYGAHGTSHRYVSQRAAEMLGRPIEDLKIITCHLGNGASITAVDGGKSVDTSMGFTPLAGVTMGTRSGDVDASLLPYLMTKLGLTDVQDMVDILNKKSGLLGLTNGLSSDMRDIQSNLDKPEVQTAYNIFIDRIRKYIGSYVTVMNGVDAIVFTAGIGENAVGVRKDIIDGMTWFGCEIDDDKNNVHGEEAVISTDDSKIKLLLVPTDEELMIARDVERLK.

Residue N8 coordinates Mg(2+). Residue K15 participates in ATP binding. Position 90 (R90) interacts with substrate. Residue D147 is the Proton donor/acceptor of the active site. ATP contacts are provided by residues 207–211 (HLGNG), 284–286 (DMR), and 330–334 (GIGEN). E383 is a Mg(2+) binding site.

Belongs to the acetokinase family. In terms of assembly, homodimer. It depends on Mg(2+) as a cofactor. Mn(2+) serves as cofactor.

The protein localises to the cytoplasm. It carries out the reaction acetate + ATP = acetyl phosphate + ADP. Its pathway is metabolic intermediate biosynthesis; acetyl-CoA biosynthesis; acetyl-CoA from acetate: step 1/2. Catalyzes the formation of acetyl phosphate from acetate and ATP. Can also catalyze the reverse reaction. This chain is Acetate kinase, found in Enterococcus faecalis (strain ATCC 700802 / V583).